We begin with the raw amino-acid sequence, 247 residues long: NAD(P)H-quinone oxidoreductase subunit K, chloroplastic (247 aa).

Cys-64, Cys-65, Cys-129, and Cys-160 together coordinate [4Fe-4S] cluster.

It belongs to the complex I 20 kDa subunit family. NDH is composed of at least 16 different subunits, 5 of which are encoded in the nucleus. The cofactor is [4Fe-4S] cluster.

The protein resides in the plastid. It localises to the chloroplast thylakoid membrane. The catalysed reaction is a plastoquinone + NADH + (n+1) H(+)(in) = a plastoquinol + NAD(+) + n H(+)(out). It carries out the reaction a plastoquinone + NADPH + (n+1) H(+)(in) = a plastoquinol + NADP(+) + n H(+)(out). Its function is as follows. NDH shuttles electrons from NAD(P)H:plastoquinone, via FMN and iron-sulfur (Fe-S) centers, to quinones in the photosynthetic chain and possibly in a chloroplast respiratory chain. The immediate electron acceptor for the enzyme in this species is believed to be plastoquinone. Couples the redox reaction to proton translocation, and thus conserves the redox energy in a proton gradient. The sequence is that of NAD(P)H-quinone oxidoreductase subunit K, chloroplastic from Mesostigma viride (Green alga).